The chain runs to 247 residues: Aspartate/glutamate leucyltransferase (247 aa).

This sequence belongs to the R-transferase family. Bpt subfamily.

It is found in the cytoplasm. The enzyme catalyses N-terminal L-glutamyl-[protein] + L-leucyl-tRNA(Leu) = N-terminal L-leucyl-L-glutamyl-[protein] + tRNA(Leu) + H(+). It catalyses the reaction N-terminal L-aspartyl-[protein] + L-leucyl-tRNA(Leu) = N-terminal L-leucyl-L-aspartyl-[protein] + tRNA(Leu) + H(+). Functionally, functions in the N-end rule pathway of protein degradation where it conjugates Leu from its aminoacyl-tRNA to the N-termini of proteins containing an N-terminal aspartate or glutamate. The chain is Aspartate/glutamate leucyltransferase from Dechloromonas aromatica (strain RCB).